Consider the following 233-residue polypeptide: Orotidine 5'-phosphate decarboxylase (233 aa).

Substrate contacts are provided by residues aspartate 10, lysine 32, 59-68 (DLKFHDIPNT), threonine 119, arginine 180, glutamine 189, glycine 209, and arginine 210. Lysine 61 serves as the catalytic Proton donor.

It belongs to the OMP decarboxylase family. Type 1 subfamily. As to quaternary structure, homodimer.

It catalyses the reaction orotidine 5'-phosphate + H(+) = UMP + CO2. It participates in pyrimidine metabolism; UMP biosynthesis via de novo pathway; UMP from orotate: step 2/2. Catalyzes the decarboxylation of orotidine 5'-monophosphate (OMP) to uridine 5'-monophosphate (UMP). This is Orotidine 5'-phosphate decarboxylase from Pasteurella multocida (strain Pm70).